Consider the following 664-residue polypeptide: Glycine--tRNA ligase beta subunit (664 aa).

It belongs to the class-II aminoacyl-tRNA synthetase family. As to quaternary structure, tetramer of two alpha and two beta subunits.

Its subcellular location is the cytoplasm. It catalyses the reaction tRNA(Gly) + glycine + ATP = glycyl-tRNA(Gly) + AMP + diphosphate. The chain is Glycine--tRNA ligase beta subunit (glyS) from Aquifex aeolicus (strain VF5).